We begin with the raw amino-acid sequence, 234 residues long: Glycerol-3-phosphate acyltransferase (234 aa).

6 helical membrane passes run 4-24, 56-76, 90-110, 122-142, 152-172, and 191-211; these read LLAI…LIAG, TVTL…VAFF, VALR…TVFA, AGML…VFLL, VASI…KYLF, and FHDS…IAII.

This sequence belongs to the PlsY family. Probably interacts with PlsX.

The protein resides in the cell inner membrane. It catalyses the reaction an acyl phosphate + sn-glycerol 3-phosphate = a 1-acyl-sn-glycero-3-phosphate + phosphate. It participates in lipid metabolism; phospholipid metabolism. Functionally, catalyzes the transfer of an acyl group from acyl-phosphate (acyl-PO(4)) to glycerol-3-phosphate (G3P) to form lysophosphatidic acid (LPA). This enzyme utilizes acyl-phosphate as fatty acyl donor, but not acyl-CoA or acyl-ACP. This chain is Glycerol-3-phosphate acyltransferase, found in Chlorobium chlorochromatii (strain CaD3).